Here is a 446-residue protein sequence, read N- to C-terminus: Probable glucuronosyltransferase Os04g0650300 (446 aa).

Residues 1–30 (MKLPLLRPLWPMLSPAAGSPDSPPEPSKPS) are Cytoplasmic-facing. Residues 31–51 (LPAAWLLLHALFCATSMAVGF) form a helical; Signal-anchor for type II membrane protein membrane-spanning segment. The Lumenal portion of the chain corresponds to 52-446 (RFSRLIVYLL…TTLLNTEGQH (395 aa)). The N-linked (GlcNAc...) asparagine glycan is linked to asparagine 87. Residues 425 to 446 (QQDAKPETPLKRTTLLNTEGQH) are disordered.

The protein belongs to the glycosyltransferase 43 family.

It is found in the golgi apparatus membrane. In terms of biological role, involved in the synthesis of glucuronoxylan hemicellulose in secondary cell walls. In Oryza sativa subsp. japonica (Rice), this protein is Probable glucuronosyltransferase Os04g0650300.